A 268-amino-acid chain; its full sequence is Tryptophan synthase alpha chain (268 aa).

Catalysis depends on proton acceptor residues Glu-49 and Asp-60.

Belongs to the TrpA family. Tetramer of two alpha and two beta chains.

It catalyses the reaction (1S,2R)-1-C-(indol-3-yl)glycerol 3-phosphate + L-serine = D-glyceraldehyde 3-phosphate + L-tryptophan + H2O. It participates in amino-acid biosynthesis; L-tryptophan biosynthesis; L-tryptophan from chorismate: step 5/5. The alpha subunit is responsible for the aldol cleavage of indoleglycerol phosphate to indole and glyceraldehyde 3-phosphate. This is Tryptophan synthase alpha chain from Escherichia coli (strain SMS-3-5 / SECEC).